Here is a 474-residue protein sequence, read N- to C-terminus: 3-isopropylmalate dehydratase large subunit (474 aa).

[4Fe-4S] cluster contacts are provided by Cys-355, Cys-415, and Cys-418.

The protein belongs to the aconitase/IPM isomerase family. LeuC type 1 subfamily. As to quaternary structure, heterodimer of LeuC and LeuD. It depends on [4Fe-4S] cluster as a cofactor.

It carries out the reaction (2R,3S)-3-isopropylmalate = (2S)-2-isopropylmalate. Its pathway is amino-acid biosynthesis; L-leucine biosynthesis; L-leucine from 3-methyl-2-oxobutanoate: step 2/4. Catalyzes the isomerization between 2-isopropylmalate and 3-isopropylmalate, via the formation of 2-isopropylmaleate. The chain is 3-isopropylmalate dehydratase large subunit from Shewanella putrefaciens (strain CN-32 / ATCC BAA-453).